The following is a 574-amino-acid chain: Sulfate adenylyltransferase (574 aa).

An N-terminal region spans residues 1–169 (MANPPHGGVL…IEAINKLNHY (169 aa)). The catalytic stretch occupies residues 170-394 (DYVALRYTPA…LRESSPPRHT (225 aa)). Sulfate is bound at residue glutamine 197. ATP-binding positions include 197 to 200 (QTRN) and 291 to 294 (GRDH). Catalysis depends on residues threonine 198, arginine 199, and asparagine 200. Arginine 199 lines the sulfate pocket. Alanine 295 is a sulfate binding site. Position 333 (valine 333) interacts with ATP. The tract at residues 395 to 574 (QGFTIFLTGY…LETEGFFDRS (180 aa)) is allosteric regulation domain; adenylyl-sulfate kinase-like. Residues 434–437 (DTVR), arginine 451, 477–478 (IA), and arginine 516 each bind 3'-phosphoadenylyl sulfate.

The protein in the N-terminal section; belongs to the sulfate adenylyltransferase family. In the C-terminal section; belongs to the APS kinase family. Homohexamer. Dimer of trimers.

The protein localises to the cytoplasm. The enzyme catalyses sulfate + ATP + H(+) = adenosine 5'-phosphosulfate + diphosphate. It functions in the pathway sulfur metabolism; hydrogen sulfide biosynthesis; sulfite from sulfate: step 1/3. Its activity is regulated as follows. Allosterically inhibited by 3'-phosphoadenosine 5'-phosphosulfate (PAPS). In terms of biological role, catalyzes the first intracellular reaction of sulfate assimilation, forming adenosine-5'-phosphosulfate (APS) from inorganic sulfate and ATP. Plays an important role in sulfate activation as a component of the biosynthesis pathway of sulfur-containing amino acids. The chain is Sulfate adenylyltransferase from Aspergillus fumigatus (strain ATCC MYA-4609 / CBS 101355 / FGSC A1100 / Af293) (Neosartorya fumigata).